Reading from the N-terminus, the 500-residue chain is NAD(P)H-quinone oxidoreductase chain 4, chloroplastic (500 aa).

14 helical membrane-spanning segments follow: residues 4-24 (FPWL…MLFL), 35-55 (YTIC…CYNF), 87-107 (IGTI…AFPV), 113-130 (LFHF…GSFS), 134-154 (LLLF…LLAM), 167-187 (FILY…GLSL), 211-231 (ILFY…IPLH), 242-262 (HYST…YGLV), 272-292 (AHSM…IYAA), 305-325 (IAYS…SITD), 330-350 (GAIL…FLAG), 386-406 (LALP…GIIT), 416-436 (ILII…LLSM), and 462-482 (LFLS…PDFV).

The protein belongs to the complex I subunit 4 family.

The protein localises to the plastid. It is found in the chloroplast thylakoid membrane. The catalysed reaction is a plastoquinone + NADH + (n+1) H(+)(in) = a plastoquinol + NAD(+) + n H(+)(out). It carries out the reaction a plastoquinone + NADPH + (n+1) H(+)(in) = a plastoquinol + NADP(+) + n H(+)(out). This is NAD(P)H-quinone oxidoreductase chain 4, chloroplastic from Lepidium virginicum (Virginia pepperweed).